We begin with the raw amino-acid sequence, 471 residues long: Delta(24(24(1)))-sterol reductase erg4A (471 aa).

The N-linked (GlcNAc...) asparagine glycan is linked to Asn-15. The next 8 helical transmembrane spans lie at 33–53 (VTLI…GAVL), 89–109 (WTIY…LPGV), 130–150 (AVSS…TGVL), 159–179 (FGPL…VAYI), 216–236 (MFFE…GTAL), 244–264 (LVAG…NACA), 282–302 (GFML…HCTL), and 313–333 (HWNP…YWVW). Residues Lys-340, Arg-344, Leu-380, and 392-393 (HY) each bind NADP(+). The chain crosses the membrane as a helical span at residues 397-417 (VFFAISWGLITGFNSPFPWFY). NADP(+) is bound by residues Asp-432, 436 to 440 (CRERY), and Tyr-447.

This sequence belongs to the ERG4/ERG24 family.

The protein localises to the endoplasmic reticulum membrane. It catalyses the reaction ergosterol + NADP(+) = ergosta-5,7,22,24(28)-tetraen-3beta-ol + NADPH + H(+). It functions in the pathway steroid metabolism; ergosterol biosynthesis. In terms of biological role, delta(24(24(1)))-sterol reductase; part of the third module of ergosterol biosynthesis pathway that includes the late steps of the pathway. Catalyzes the last step of ergosterol biosynthesis by converting ergosta-5,7,22,24(28)-tetraen-3beta-ol into ergosterol. The third module or late pathway involves the ergosterol synthesis itself through consecutive reactions that mainly occur in the endoplasmic reticulum (ER) membrane. Firstly, the squalene synthase erg9 catalyzes the condensation of 2 farnesyl pyrophosphate moieties to form squalene, which is the precursor of all steroids. Squalene synthase is crucial for balancing the incorporation of farnesyl diphosphate (FPP) into sterol and nonsterol isoprene synthesis. Secondly, squalene is converted into lanosterol by the consecutive action of the squalene epoxidase erg1 and the lanosterol synthase erg7. Then, the delta(24)-sterol C-methyltransferase erg6 methylates lanosterol at C-24 to produce eburicol. Eburicol is the substrate of the sterol 14-alpha demethylase encoded by cyp51A and cyp51B, to yield 4,4,24-trimethyl ergosta-8,14,24(28)-trienol. The C-14 reductase erg24 then reduces the C14=C15 double bond which leads to 4,4-dimethylfecosterol. A sequence of further demethylations at C-4, involving the C-4 demethylation complex containing the C-4 methylsterol oxidases erg25A or erg25B, the sterol-4-alpha-carboxylate 3-dehydrogenase erg26 and the 3-keto-steroid reductase erg27, leads to the production of fecosterol via 4-methylfecosterol. The C-8 sterol isomerase erg2 then catalyzes the reaction which results in unsaturation at C-7 in the B ring of sterols and thus converts fecosterol to episterol. The sterol-C5-desaturase erg3B then catalyzes the introduction of a C-5 double bond in the B ring to produce 5-dehydroepisterol. The 2 other sterol-C5-desaturases, erg3A and erg3C, seem to be less important in ergosterol biosynthesis. The C-22 sterol desaturase erg5 further converts 5-dehydroepisterol into ergosta-5,7,22,24(28)-tetraen-3beta-ol by forming the C-22(23) double bond in the sterol side chain. Finally, ergosta-5,7,22,24(28)-tetraen-3beta-ol is substrate of the C-24(28) sterol reductases erg4A and erg4B to produce ergosterol. Possible alternative sterol biosynthetic pathways might exist from fecosterol to ergosterol, depending on the activities of the erg3 isoforms. The polypeptide is Delta(24(24(1)))-sterol reductase erg4A (Aspergillus fumigatus (strain ATCC MYA-4609 / CBS 101355 / FGSC A1100 / Af293) (Neosartorya fumigata)).